The following is a 286-amino-acid chain: Putative chaperone BssE (286 aa).

Residues G47–S54 and G108–E115 contribute to the ATP site.

Belongs to the CbbQ/NirQ/NorQ/GpvN family.

May have a role in assembly and/or activation of benzylsuccinate synthase. The chain is Putative chaperone BssE (bssE) from Thauera aromatica.